Here is a 758-residue protein sequence, read N- to C-terminus: Spastin (758 aa).

The interval 1–99 is disordered; the sequence is MVRTKNQSSS…PTTCSPRSGH (99 aa). Over 1 to 121 the chain is Cytoplasmic; it reads MVRTKNQSSS…KQNLYVVSFP (121 aa). A required for localization to punctate cytoplasmic foci region spans residues 1-210; the sequence is MVRTKNQSSS…RPIQPLEMAA (210 aa). 4 stretches are compositionally biased toward low complexity: residues 8–29, 43–58, 66–76, and 85–95; these read SSSS…SATG, RSSS…AGGS, SSNRRSPGSSP, and TDDLTPTTCSP. An intramembrane region (helical) is located at residues 122–142; that stretch reads IIFLFNVLRSLIYQLFCIFRY. Residues 143 to 758 are Cytoplasmic-facing; the sequence is LYGASTKVIY…WSQDYGDITI (616 aa). Composition is skewed to polar residues over residues 169–180 and 189–198; these read SKEQQQSLNHPS and QEQQLSNQPQ. The interval 169 to 221 is disordered; sequence SKEQQQSLNHPSELNRDSDGQEQQLSNQPQRFRPIQPLEMAANRPGGGYSPGP. The interval 208–758 is sufficient for interaction with microtubules and microtubule severing; sequence MAANRPGGGY…WSQDYGDITI (551 aa). The MIT domain maps to 233-308; it reads HRRAFEYISK…SMARDRLHFL (76 aa). Disordered regions lie at residues 353–376 and 390–454; these read RVRS…GRKL and NKSQ…ASTP. Composition is skewed to polar residues over residues 390-406 and 425-454; these read NKSQ…TSVG and QFSS…ASTP. Positions 443 to 455 are required for interaction with microtubules; that stretch reads NNGPSGSGASTPV. 523–530 provides a ligand contact to ATP; sequence GPPGNGKT.

This sequence belongs to the AAA ATPase family. Spastin subfamily. As to quaternary structure, homohexamer. The homohexamer is stabilized by ATP-binding. The homohexamer may adopt a ring conformation through which microtubules pass prior to being severed. Interacts with microtubules. Interacts with atl; may be involved in microtubule dynamics.

The protein resides in the membrane. It localises to the cytoplasm. The protein localises to the cytoskeleton. Its subcellular location is the microtubule organizing center. It is found in the centrosome. The protein resides in the chromosome. It localises to the lipid droplet. It catalyses the reaction n ATP + n H2O + a microtubule = n ADP + n phosphate + (n+1) alpha/beta tubulin heterodimers.. Its function is as follows. ATP-dependent microtubule severing protein. Stimulates microtubule minus-end depolymerization and poleward microtubule flux in the mitotic spindle. Regulates microtubule stability in the neuromuscular junction synapse. Involved in lipid metabolism by regulating the size and distribution of lipid droplets. Involved in axon regeneration by regulating microtubule severing. The polypeptide is Spastin (Drosophila yakuba (Fruit fly)).